A 304-amino-acid polypeptide reads, in one-letter code: MSSNPSRSNSRSKNGDLESGLKFVDNDHDSKDIEARNRNHFYGFRAEPIYDQTERLANQVAELQEQQKRLFGPSGADFEPNIHRLRYINYGNPAPFGLSAFAFTTFLLSLFNVNAGHVKVSNMVTAPAAFYGGLAQLLASMWEMASGNTFGGAVFGSYGCFWLSYASIFIPWFNIQNSYDDPNDFNYAIGLYLICWFIFTFLVLLCTVRSTLAFFSLFMSLDVCFLLLACAFLRTSDGSPNVVLIRVGGAFGIFSACAAWYNAMAGLATIENSFFTVPRAIFPWSLEGLGPEEANRRRMMADDK.

Residues 1-12 show a composition bias toward low complexity; sequence MSSNPSRSNSRS. Residues 1–23 are disordered; sequence MSSNPSRSNSRSKNGDLESGLKF. The next 6 helical transmembrane spans lie at 93–113, 123–143, 150–170, 188–208, 212–232, and 247–267; these read PAPF…LFNV, MVTA…SMWE, FGGA…SIFI, AIGL…LCTV, LAFF…ACAF, and VGGA…MAGL.

Belongs to the acetate uptake transporter (AceTr) (TC 2.A.96) family.

It localises to the endoplasmic reticulum membrane. Its subcellular location is the golgi apparatus. The protein resides in the golgi stack membrane. The protein localises to the vacuole membrane. Functionally, has a role in meiosis. This chain is Meiotically up-regulated gene 86 protein (mug86), found in Schizosaccharomyces pombe (strain 972 / ATCC 24843) (Fission yeast).